Reading from the N-terminus, the 170-residue chain is UPF0260 protein RPE_1881 (170 aa).

This sequence belongs to the UPF0260 family.

The chain is UPF0260 protein RPE_1881 from Rhodopseudomonas palustris (strain BisA53).